Here is a 745-residue protein sequence, read N- to C-terminus: Chitin synthase D (745 aa).

5 helical membrane-spanning segments follow: residues 26-46 (LAHR…PVHL), 55-75 (VLML…IPWL), 412-432 (TTAL…SSIN), 434-454 (LPVG…FYLG), and 464-484 (LFPL…VYGI). 2 disordered regions span residues 613–635 (TGDN…SLHQ) and 672–745 (ILPH…ESMV). Residues 707–720 (NASTRGSMEGNTPE) are compositionally biased toward polar residues.

The protein belongs to the chitin synthase family. Class VI subfamily.

The protein resides in the cell membrane. It carries out the reaction [(1-&gt;4)-N-acetyl-beta-D-glucosaminyl](n) + UDP-N-acetyl-alpha-D-glucosamine = [(1-&gt;4)-N-acetyl-beta-D-glucosaminyl](n+1) + UDP + H(+). Polymerizes chitin, a structural polymer of the cell wall and septum, by transferring the sugar moiety of UDP-GlcNAc to the non-reducing end of the growing chitin polymer. The sequence is that of Chitin synthase D (chsD) from Aspergillus fumigatus (strain ATCC MYA-4609 / CBS 101355 / FGSC A1100 / Af293) (Neosartorya fumigata).